Consider the following 670-residue polypeptide: Receptor for retinol uptake STRA6 (670 aa).

Residues 1–50 (MESQASENGSQTSSGVTDDYSSWYIEEPLGAEEVQPEGVIPLCQLTAPPA) lie on the Extracellular side of the membrane. Residue asparagine 8 is glycosylated (N-linked (GlcNAc...) asparagine). A helical transmembrane segment spans residues 51-71 (LLHACLASLSFLVLLLLALLV). At 72 to 97 (RRRRLWPRCGHRGLGLPSPVDFLAGD) the chain is on the cytoplasmic side. A helical transmembrane segment spans residues 98-118 (LSWTVPAAVFVVLFSNLCLLL). The Extracellular portion of the chain corresponds to 119–144 (PDENPLPFLNLTAASSPDGEMETSRG). Residue asparagine 128 is glycosylated (N-linked (GlcNAc...) asparagine). Residues 145–165 (PWKLLALLYYPALYYPLAACA) traverse the membrane as a helical segment. The Cytoplasmic segment spans residues 166 to 168 (SAG). The helical transmembrane segment at 169–189 (HQAAFLLGTVLSWAHFGVQVW) threads the bilayer. Residues 190–205 (QKAECPQDPKIYKHYS) lie on the Extracellular side of the membrane. The helical transmembrane segment at 206-226 (LLASLPLLLGLGFLSLWYPVQ) threads the bilayer. The Cytoplasmic portion of the chain corresponds to 227–296 (LVQSLRHRTG…PQPGFRLPLK (70 aa)). The tract at residues 235 to 294 (TGAGSQGLQTSYSEKYLRTLLCPKKLDSCSHPASKRSLLSRAWAFSHHSIYTPQPGFRLP) is interaction with RBP1. A helical membrane pass occupies residues 297-317 (LVISATLTGTATYQVALLLLV). Residues 318–368 (SVVPTVQKVRAGINTDVSYLLAGFGIVLSEDRQEVVELVKHHLWTVEACYI) lie on the Extracellular side of the membrane. Residues 369–389 (SALVLSCASTFLLLIRSLRTH) form a helical membrane-spanning segment. Residues 390-423 (RANLQALHRGAALDLDPPLQSIHPSRQAIVSWMS) are Cytoplasmic-facing. Residues 424 to 444 (FCAYQTAFSCLGLLVQQVIFF) traverse the membrane as a helical segment. At 445-474 (LGTTSLAFLVFVPLLHGRNLLLLRSLESTW) the chain is on the extracellular side. A helical membrane pass occupies residues 475–495 (PFWLTVALAVILQNIAANWIF). Topologically, residues 496-510 (LRTHHGYPELTNRRM) are cytoplasmic. An intramembrane region (helical) is located at residues 511–548 (LCVATFLLFPINMLVGAIMAVWRVLISSLYNTVHLGQM). Residues 549–670 (DLSLLPQRAA…TSAKANGTQP (122 aa)) are Cytoplasmic-facing. A Phosphotyrosine modification is found at tyrosine 644.

In terms of assembly, homodimer. Interacts with JAK2 and STAT5. Interacts (via extracellular domains) with RBP4. Interacts (via cytoplasmic domains) with RBP1. In terms of processing, phosphorylated on tyrosine residues in response to RBP4 binding. Phosphorylation requires the presence of LRAT, suggesting it may be triggered by the uptake of retinol that is then metabolized within the cell to retinoids that function as signaling molecules. Widely expressed in the embryo. Detected in adult in the retinal pigment epithelium in the eye. In the adult, is highly expressed in cells that compose blood-organ barriers in the brain (choroid plexus and the brain microvascular), in testis (the basal layer of the seminiferous epithelium), in the yolk sac, and in the chorioallantoic placenta. Detected in white adipose tissue and skeletal muscle, but not in liver (at protein level). Widely expressed in adult, with high expression levels in the eye. Detected in brain, cerebellum, testis, pituitary, pancreas, kidney, spleen, and female genital tract; and at very low levels in heart and lung. Not detected in liver.

It localises to the cell membrane. Functionally, functions as a retinol transporter. Accepts all-trans retinol from the extracellular retinol-binding protein RBP4, facilitates retinol transport across the cell membrane, and then transfers retinol to the cytoplasmic retinol-binding protein RBP1. Retinol uptake is enhanced by LRAT, an enzyme that converts retinol to all-trans retinyl esters, the storage forms of vitamin A. Contributes to the activation of a signaling cascade that depends on retinol transport and LRAT-dependent generation of retinol metabolites that then trigger activation of JAK2 and its target STAT5, and ultimately increase the expression of SOCS3 and inhibit cellular responses to insulin. Important for the homeostasis of vitamin A and its derivatives, such as retinoic acid and 11-cis-retinal. STRA6-mediated transport is particularly important in the eye, and under conditions of dietary vitamin A deficiency. Does not transport retinoic acid. This is Receptor for retinol uptake STRA6 (Stra6) from Mus musculus (Mouse).